A 77-amino-acid chain; its full sequence is U10-lycotoxin-Ls1d (77 aa).

The first 20 residues, 1-20 (MKLIIFTGLFLFAIVSLIEA), serve as a signal peptide directing secretion. A propeptide spanning residues 21–26 (EEESGR) is cleaved from the precursor.

It belongs to the neurotoxin 19 (CSTX) family. 09 (U10-Lctx) subfamily. Contains 4 disulfide bonds. In terms of tissue distribution, expressed by the venom gland.

The protein resides in the secreted. This chain is U10-lycotoxin-Ls1d, found in Lycosa singoriensis (Wolf spider).